A 247-amino-acid chain; its full sequence is Cell division protein ZapD (247 aa).

The protein belongs to the ZapD family. As to quaternary structure, interacts with FtsZ.

The protein resides in the cytoplasm. In terms of biological role, cell division factor that enhances FtsZ-ring assembly. Directly interacts with FtsZ and promotes bundling of FtsZ protofilaments, with a reduction in FtsZ GTPase activity. In Klebsiella pneumoniae (strain 342), this protein is Cell division protein ZapD.